The following is a 314-amino-acid chain: MPLEQRSQHCKPEEGLEAQGEALGLVGAQAPATEEQETASSSSTLVEVTLREVPAAESPSPPHSPQGASTLPTTINYTLWSQSDEGSSNEEQEGPSTFPDLETSFQVALSRKMAELVHFLLLKYRAREPFTKAEMLGSVIRNFQDFFPVIFSKASEYLQLVFGIEVVEVVRIGHLYILVTCLGLSYDGLLGDNQIVPKTGLLIIVLAIIAKEGDCAPEEKIWEELSVLEASDGREDSVFAHPRKLLTQDLVQENYLEYRQVPGSDPACYEFLWGPRALVETSYVKVLHHLLKISGGPHISYPPLHEWAFREGEE.

Basic and acidic residues predominate over residues 1–14; that stretch reads MPLEQRSQHCKPEE. Positions 1 to 72 are disordered; the sequence is MPLEQRSQHC…HSPQGASTLP (72 aa). The span at 17 to 44 shows a compositional bias: low complexity; sequence EAQGEALGLVGAQAPATEEQETASSSST. The region spanning 109–308 is the MAGE domain; sequence LSRKMAELVH…ISYPPLHEWA (200 aa).

Expressed in many tumors of several types, such as melanoma, head and neck squamous cell carcinoma, lung carcinoma and breast carcinoma, but not in normal tissues except for testes.

Not known, though may play a role tumor transformation or progression. In vitro promotes cell viability in melanoma cell lines. This is Melanoma-associated antigen 12 (MAGEA12) from Homo sapiens (Human).